We begin with the raw amino-acid sequence, 275 residues long: NAD(P)H dehydrogenase [quinone] 1 (275 aa).

Residues H13, 19–20 (FN), and Q68 each bind FAD. S83 is subject to Phosphoserine. Residue 105–108 (LQWF) participates in FAD binding. Substrate is bound at residue 127–129 (AYT). Residues 149-152 (TTGG), Y157, and R202 contribute to the FAD site. Positions 226 to 275 (PSSLFDLNFQAGFLLKKEIEDEQKNNKYGLSVGHHLGKPIPTDNQIKARK) are important for apoenzyme conformational stability. K252 is covalently cross-linked (Glycyl lysine isopeptide (Lys-Gly) (interchain with G-Cter in SUMO2)).

Belongs to the NAD(P)H dehydrogenase (quinone) family. Homodimer. Interacts with PDLIM4 isoform 2; this interaction stabilizes PDLIM4 isoform 2 in response to oxidative stress and protects it from ubiquitin-independent degradation by the core 20S proteasome. Interacts with TP73 (via SAM domain); this interaction is NADH-dependent, stabilizes TP73 in response to oxidative stress and protects it from ubiquitin-independent degradation by the 20S proteasome. Interacts with TP53; this interaction is NADH-dependent, stabilizes TP53 in response to oxidative stress and protects it from ubiquitin-independent degradation by the 20S proteasome. FAD serves as cofactor.

Its subcellular location is the cytoplasm. The protein localises to the cytosol. It catalyses the reaction a quinone + NADH + H(+) = a quinol + NAD(+). The enzyme catalyses a quinone + NADPH + H(+) = a quinol + NADP(+). It carries out the reaction ubiquinone-10 + NADH + H(+) = ubiquinol-10 + NAD(+). The catalysed reaction is menadione + NADH + H(+) = menadiol + NAD(+). Flavin-containing quinone reductase that catalyzes two-electron reduction of quinones to hydroquinones using either NADH or NADPH as electron donors. In a ping-pong kinetic mechanism, the electrons are sequentially transferred from NAD(P)H to flavin cofactor and then from reduced flavin to the quinone, bypassing the formation of semiquinone and reactive oxygen species. Regulates cellular redox state primarily through quinone detoxification. Reduces components of plasma membrane redox system such as coenzyme Q and vitamin quinones, producing antioxidant hydroquinone forms. In the process may function as superoxide scavenger to prevent hydroquinone oxidation and facilitate excretion. Alternatively, can activate quinones and their derivatives by generating redox reactive hydroquinones with DNA cross-linking antitumor potential. Acts as a gatekeeper of the core 20S proteasome known to degrade proteins with unstructured regions. Upon oxidative stress, interacts with tumor suppressors TP53 and TP73 in a NADH-dependent way and inhibits their ubiquitin-independent degradation by the 20S proteasome. This is NAD(P)H dehydrogenase [quinone] 1 (NQO1) from Cavia porcellus (Guinea pig).